We begin with the raw amino-acid sequence, 285 residues long: Energy-coupling factor transporter ATP-binding protein EcfA2 (285 aa).

The ABC transporter domain occupies 3–245; it reads INFEQVNFSY…DLVWFKTVAL (243 aa). Residue 40–47 coordinates ATP; the sequence is GQTGSGKS. E171 acts as the Proton acceptor in catalysis.

Belongs to the ABC transporter superfamily. Energy-coupling factor EcfA family. In terms of assembly, forms a stable energy-coupling factor (ECF) transporter complex probably composed of 2 membrane-embedded substrate-binding proteins (S component), 2 ATP-binding proteins (A component) and 2 transmembrane proteins (T component). This complex interacts with a number of substrate-specific components, including FolT, PanT and RibU for 5-formyltetrahydrofolate, pantothenate and riboflavin respectively.

The protein resides in the cell membrane. Functionally, ATP-binding (A) component of a common energy-coupling factor (ECF) ABC-transporter complex. Unlike classic ABC transporters this ECF transporter provides the energy necessary to transport a number of different substrates including 5-formyltetrahydrofolate, pantothenate and riboflavin. Expression of the complex plus FolT in E.coli allows 5-formyltetrahydrofolate uptake; 5-formyltetrahydrofolate is not taken up in the absence of FolT or the EcfA1A2T complex. The protein is Energy-coupling factor transporter ATP-binding protein EcfA2 of Leuconostoc mesenteroides subsp. mesenteroides (strain ATCC 8293 / DSM 20343 / BCRC 11652 / CCM 1803 / JCM 6124 / NCDO 523 / NBRC 100496 / NCIMB 8023 / NCTC 12954 / NRRL B-1118 / 37Y).